The primary structure comprises 295 residues: UDP-N-acetylenolpyruvoylglucosamine reductase (295 aa).

An FAD-binding PCMH-type domain is found at 23–188; that stretch reads KVGGPADFLA…ISAKFALKPG (166 aa). The active site involves arginine 167. Serine 217 functions as the Proton donor in the catalytic mechanism. Residue glutamate 287 is part of the active site.

Belongs to the MurB family. FAD serves as cofactor.

The protein resides in the cytoplasm. The catalysed reaction is UDP-N-acetyl-alpha-D-muramate + NADP(+) = UDP-N-acetyl-3-O-(1-carboxyvinyl)-alpha-D-glucosamine + NADPH + H(+). The protein operates within cell wall biogenesis; peptidoglycan biosynthesis. Its function is as follows. Cell wall formation. In Streptococcus pyogenes serotype M49 (strain NZ131), this protein is UDP-N-acetylenolpyruvoylglucosamine reductase.